The primary structure comprises 84 residues: Glutaredoxin (84 aa).

One can recognise a Glutaredoxin domain in the interval 1-84 (MPPVVIYTTA…AGKLDALLSA (84 aa)). A disulfide bond links C12 and C15.

This sequence belongs to the glutaredoxin family. As to quaternary structure, monomer.

It localises to the cytoplasm. Functionally, has a glutathione-disulfide oxidoreductase activity in the presence of NADPH and glutathione reductase. Reduces low molecular weight disulfides and proteins. In Pseudomonas aeruginosa (strain ATCC 15692 / DSM 22644 / CIP 104116 / JCM 14847 / LMG 12228 / 1C / PRS 101 / PAO1), this protein is Glutaredoxin (grx).